We begin with the raw amino-acid sequence, 325 residues long: DNA-directed RNA polymerase subunit alpha (325 aa).

The tract at residues 1–238 is alpha N-terminal domain (alpha-NTD); sequence MSPKNLLKGF…DHLTVFINFE (238 aa). The segment at 255-325 is alpha C-terminal domain (alpha-CTD); it reads LKAALSKHVE…MGLSFGMRDF (71 aa).

Belongs to the RNA polymerase alpha chain family. Homodimer. The RNAP catalytic core consists of 2 alpha, 1 beta, 1 beta' and 1 omega subunit. When a sigma factor is associated with the core the holoenzyme is formed, which can initiate transcription.

The catalysed reaction is RNA(n) + a ribonucleoside 5'-triphosphate = RNA(n+1) + diphosphate. In terms of biological role, DNA-dependent RNA polymerase catalyzes the transcription of DNA into RNA using the four ribonucleoside triphosphates as substrates. In Leptospira biflexa serovar Patoc (strain Patoc 1 / Ames), this protein is DNA-directed RNA polymerase subunit alpha.